The chain runs to 152 residues: UPF0266 membrane protein plu2700 (152 aa).

3 helical membrane-spanning segments follow: residues 6 to 26 (IALT…EFVV), 45 to 65 (IDAL…ITVY), and 67 to 87 (SRLT…IAYI).

The protein belongs to the UPF0266 family.

It is found in the cell inner membrane. This chain is UPF0266 membrane protein plu2700, found in Photorhabdus laumondii subsp. laumondii (strain DSM 15139 / CIP 105565 / TT01) (Photorhabdus luminescens subsp. laumondii).